Here is a 231-residue protein sequence, read N- to C-terminus: Ribosomal RNA small subunit methyltransferase G (231 aa).

S-adenosyl-L-methionine is bound by residues Gly85, Phe90, and Arg154.

The protein belongs to the methyltransferase superfamily. RNA methyltransferase RsmG family.

The protein resides in the cytoplasm. It catalyses the reaction guanosine(527) in 16S rRNA + S-adenosyl-L-methionine = N(7)-methylguanosine(527) in 16S rRNA + S-adenosyl-L-homocysteine. Its function is as follows. Specifically methylates the N7 position of guanine in position 527 of 16S rRNA. This is Ribosomal RNA small subunit methyltransferase G from Rhodopseudomonas palustris (strain BisA53).